We begin with the raw amino-acid sequence, 284 residues long: Shikimate dehydrogenase (NADP(+)) (284 aa).

Residues 20-22 and serine 67 contribute to the shikimate site; that span reads SIS. Residue lysine 71 is the Proton acceptor of the active site. Residues asparagine 92 and aspartate 107 each coordinate shikimate. Residues 129–133 and valine 227 each bind NADP(+); that span reads GAGGA. Residue tyrosine 229 coordinates shikimate. Glycine 250 contacts NADP(+).

Belongs to the shikimate dehydrogenase family. In terms of assembly, homodimer.

It catalyses the reaction shikimate + NADP(+) = 3-dehydroshikimate + NADPH + H(+). It participates in metabolic intermediate biosynthesis; chorismate biosynthesis; chorismate from D-erythrose 4-phosphate and phosphoenolpyruvate: step 4/7. In terms of biological role, involved in the biosynthesis of the chorismate, which leads to the biosynthesis of aromatic amino acids. Catalyzes the reversible NADPH linked reduction of 3-dehydroshikimate (DHSA) to yield shikimate (SA). The polypeptide is Shikimate dehydrogenase (NADP(+)) (Streptococcus sanguinis (strain SK36)).